Here is a 148-residue protein sequence, read N- to C-terminus: Large ribosomal subunit protein uL15 (148 aa).

The interval M1–L61 is disordered. Over residues T30 to K39 the composition is skewed to basic residues.

It belongs to the universal ribosomal protein uL15 family. In terms of assembly, part of the 50S ribosomal subunit.

Functionally, binds to the 23S rRNA. The protein is Large ribosomal subunit protein uL15 of Geobacter metallireducens (strain ATCC 53774 / DSM 7210 / GS-15).